The chain runs to 161 residues: Phosphopantetheine adenylyltransferase (161 aa).

Thr-9 is a binding site for substrate. ATP contacts are provided by residues 9-10 (TF) and His-17. Lys-41, Leu-73, and Arg-87 together coordinate substrate. Residues 88–90 (GLR), Glu-98, and 123–129 (YQFISGT) contribute to the ATP site.

It belongs to the bacterial CoaD family. In terms of assembly, homohexamer. The cofactor is Mg(2+).

Its subcellular location is the cytoplasm. The enzyme catalyses (R)-4'-phosphopantetheine + ATP + H(+) = 3'-dephospho-CoA + diphosphate. It participates in cofactor biosynthesis; coenzyme A biosynthesis; CoA from (R)-pantothenate: step 4/5. Functionally, reversibly transfers an adenylyl group from ATP to 4'-phosphopantetheine, yielding dephospho-CoA (dPCoA) and pyrophosphate. This is Phosphopantetheine adenylyltransferase from Cupriavidus pinatubonensis (strain JMP 134 / LMG 1197) (Cupriavidus necator (strain JMP 134)).